The primary structure comprises 451 residues: Proline--tRNA ligase (451 aa).

It belongs to the class-II aminoacyl-tRNA synthetase family. ProS type 2 subfamily. Homodimer.

It is found in the cytoplasm. It catalyses the reaction tRNA(Pro) + L-proline + ATP = L-prolyl-tRNA(Pro) + AMP + diphosphate. In terms of biological role, catalyzes the attachment of proline to tRNA(Pro) in a two-step reaction: proline is first activated by ATP to form Pro-AMP and then transferred to the acceptor end of tRNA(Pro). The sequence is that of Proline--tRNA ligase from Ruegeria sp. (strain TM1040) (Silicibacter sp.).